A 413-amino-acid polypeptide reads, in one-letter code: Gamma-glutamyl phosphate reductase (413 aa).

It belongs to the gamma-glutamyl phosphate reductase family.

It localises to the cytoplasm. The enzyme catalyses L-glutamate 5-semialdehyde + phosphate + NADP(+) = L-glutamyl 5-phosphate + NADPH + H(+). It functions in the pathway amino-acid biosynthesis; L-proline biosynthesis; L-glutamate 5-semialdehyde from L-glutamate: step 2/2. Its function is as follows. Catalyzes the NADPH-dependent reduction of L-glutamate 5-phosphate into L-glutamate 5-semialdehyde and phosphate. The product spontaneously undergoes cyclization to form 1-pyrroline-5-carboxylate. The polypeptide is Gamma-glutamyl phosphate reductase (Thermus thermophilus (strain ATCC 27634 / DSM 579 / HB8)).